The sequence spans 72 residues: UPF0270 protein ETA_31870 (72 aa).

This sequence belongs to the UPF0270 family.

The chain is UPF0270 protein ETA_31870 from Erwinia tasmaniensis (strain DSM 17950 / CFBP 7177 / CIP 109463 / NCPPB 4357 / Et1/99).